A 965-amino-acid chain; its full sequence is Calsyntenin-2 (965 aa).

Positions 1–20 (MLPGRLCLVPLLLALGVGSG) are cleaved as a signal peptide. The Extracellular segment spans residues 21–835 (GGSGDGGDSR…SIQRSSVVPS (815 aa)). Cadherin domains follow at residues 46–162 (IETS…APTF) and 163–282 (KEPA…MPLF). 2 N-linked (GlcNAc...) asparagine glycosylation sites follow: N58 and N100. Residues N344, N376, N720, and N733 are each glycosylated (N-linked (GlcNAc...) asparagine). The chain crosses the membrane as a helical span at residues 836–856 (IATVVIIISVCMLVFVVAMGV). Residues 857 to 965 (YRVRIAHQHF…NTAGVINIWK (109 aa)) are Cytoplasmic-facing. The segment at 891–965 (PMEKHEGPGH…NTAGVINIWK (75 aa)) is disordered. A compositionally biased stretch (basic and acidic residues) spans 892–902 (MEKHEGPGHGE). Positions 903–915 (DETEGEEEEEAEE) are enriched in acidic residues. The span at 942 to 959 (QSGTSSQRPERSTWNTAG) shows a compositional bias: polar residues.

Belongs to the calsyntenin family. Proteolytically processed under normal cellular conditions. A primary zeta-cleavage generates a large extracellular (soluble) N-terminal domain (sAlc) and a short C-terminal transmembrane fragment (CTF1). A secondary cleavage catalyzed by gamma-secretase within the transmembrane domain releases the beta-Alc-gamma chain in the extracellular milieu and produces an intracellular fragment (AlcICD). This processing is strongly suppressed in the tripartite complex formed with APBA2 and APP, which seems to prevent the association with PSEN1.

It localises to the postsynaptic cell membrane. Its subcellular location is the endoplasmic reticulum membrane. The protein localises to the golgi apparatus membrane. The protein resides in the cell projection. It is found in the dendrite. Functionally, postsynaptic adhesion molecule that binds to presynaptic neurexins to mediate synapse formation, and which is involved in learning and memory. Promotes synapse development by acting as a cell adhesion molecule at the postsynaptic membrane, which associates with neurexin-alpha at the presynaptic membrane. In Rattus norvegicus (Rat), this protein is Calsyntenin-2.